Here is a 295-residue protein sequence, read N- to C-terminus: MEIRRRPPNPTVRVENLEYAVPHREAQAKNILEEIVWHKDIEIKNFKKIVSLEDLIKKIEKLPTPKDFYKNILESKIKPGVIAEIKKASPSKGVIRKDFNPENIAICYEGLGASCISVLTDKRFFQGSYEILETVRRSTNLPLLCKDFIISAYQIYKARVSGADAILLIAAILSDDDLIYLKKIADNLKMSVLVEVHNADELERILKLKSFNLIGINNRDLKTFKTDLKTSIELMHTYADIFLKQNIIPISESGINCAEDLESLRSIGIKGVLIGETFMRETDIEQSFKKLFTSI.

The protein belongs to the TrpC family.

The catalysed reaction is 1-(2-carboxyphenylamino)-1-deoxy-D-ribulose 5-phosphate + H(+) = (1S,2R)-1-C-(indol-3-yl)glycerol 3-phosphate + CO2 + H2O. Its pathway is amino-acid biosynthesis; L-tryptophan biosynthesis; L-tryptophan from chorismate: step 4/5. The polypeptide is Indole-3-glycerol phosphate synthase (Prochlorococcus marinus (strain MIT 9301)).